We begin with the raw amino-acid sequence, 146 residues long: D-aminoacyl-tRNA deacylase (146 aa).

Positions 137–138 match the Gly-cisPro motif, important for rejection of L-amino acids motif; it reads GP.

This sequence belongs to the DTD family. In terms of assembly, homodimer.

It localises to the cytoplasm. The catalysed reaction is glycyl-tRNA(Ala) + H2O = tRNA(Ala) + glycine + H(+). The enzyme catalyses a D-aminoacyl-tRNA + H2O = a tRNA + a D-alpha-amino acid + H(+). Its function is as follows. An aminoacyl-tRNA editing enzyme that deacylates mischarged D-aminoacyl-tRNAs. Also deacylates mischarged glycyl-tRNA(Ala), protecting cells against glycine mischarging by AlaRS. Acts via tRNA-based rather than protein-based catalysis; rejects L-amino acids rather than detecting D-amino acids in the active site. By recycling D-aminoacyl-tRNA to D-amino acids and free tRNA molecules, this enzyme counteracts the toxicity associated with the formation of D-aminoacyl-tRNA entities in vivo and helps enforce protein L-homochirality. The protein is D-aminoacyl-tRNA deacylase of Acinetobacter baylyi (strain ATCC 33305 / BD413 / ADP1).